The sequence spans 455 residues: UDP-N-acetylmuramoylalanine--D-glutamate ligase (455 aa).

119 to 125 (GTNGKTT) serves as a coordination point for ATP.

It belongs to the MurCDEF family.

Its subcellular location is the cytoplasm. The catalysed reaction is UDP-N-acetyl-alpha-D-muramoyl-L-alanine + D-glutamate + ATP = UDP-N-acetyl-alpha-D-muramoyl-L-alanyl-D-glutamate + ADP + phosphate + H(+). It participates in cell wall biogenesis; peptidoglycan biosynthesis. In terms of biological role, cell wall formation. Catalyzes the addition of glutamate to the nucleotide precursor UDP-N-acetylmuramoyl-L-alanine (UMA). The polypeptide is UDP-N-acetylmuramoylalanine--D-glutamate ligase (Listeria monocytogenes serotype 4b (strain F2365)).